The chain runs to 150 residues: Cell division protein SepF (150 aa).

The segment at 26–45 (DREEIPEEHESKDRTAYQSK) is disordered.

Belongs to the SepF family. In terms of assembly, homodimer. Interacts with FtsZ.

Its subcellular location is the cytoplasm. In terms of biological role, cell division protein that is part of the divisome complex and is recruited early to the Z-ring. Probably stimulates Z-ring formation, perhaps through the cross-linking of FtsZ protofilaments. Its function overlaps with FtsA. The protein is Cell division protein SepF of Bacillus licheniformis (strain ATCC 14580 / DSM 13 / JCM 2505 / CCUG 7422 / NBRC 12200 / NCIMB 9375 / NCTC 10341 / NRRL NRS-1264 / Gibson 46).